Consider the following 222-residue polypeptide: Thiamine-phosphate synthase (222 aa).

4-amino-2-methyl-5-(diphosphooxymethyl)pyrimidine is bound by residues 42-46 and Asn-74; that span reads QYRDK. Residues Asp-75 and Asp-94 each coordinate Mg(2+). Thr-113 is a binding site for 4-amino-2-methyl-5-(diphosphooxymethyl)pyrimidine. 140-142 provides a ligand contact to 2-[(2R,5Z)-2-carboxy-4-methylthiazol-5(2H)-ylidene]ethyl phosphate; sequence SAT. Lys-143 lines the 4-amino-2-methyl-5-(diphosphooxymethyl)pyrimidine pocket. Gly-169 lines the 2-[(2R,5Z)-2-carboxy-4-methylthiazol-5(2H)-ylidene]ethyl phosphate pocket.

It belongs to the thiamine-phosphate synthase family. Mg(2+) serves as cofactor.

It carries out the reaction 2-[(2R,5Z)-2-carboxy-4-methylthiazol-5(2H)-ylidene]ethyl phosphate + 4-amino-2-methyl-5-(diphosphooxymethyl)pyrimidine + 2 H(+) = thiamine phosphate + CO2 + diphosphate. It catalyses the reaction 2-(2-carboxy-4-methylthiazol-5-yl)ethyl phosphate + 4-amino-2-methyl-5-(diphosphooxymethyl)pyrimidine + 2 H(+) = thiamine phosphate + CO2 + diphosphate. The enzyme catalyses 4-methyl-5-(2-phosphooxyethyl)-thiazole + 4-amino-2-methyl-5-(diphosphooxymethyl)pyrimidine + H(+) = thiamine phosphate + diphosphate. It participates in cofactor biosynthesis; thiamine diphosphate biosynthesis; thiamine phosphate from 4-amino-2-methyl-5-diphosphomethylpyrimidine and 4-methyl-5-(2-phosphoethyl)-thiazole: step 1/1. Functionally, condenses 4-methyl-5-(beta-hydroxyethyl)thiazole monophosphate (THZ-P) and 2-methyl-4-amino-5-hydroxymethyl pyrimidine pyrophosphate (HMP-PP) to form thiamine monophosphate (TMP). This is Thiamine-phosphate synthase from Marinobacter nauticus (strain ATCC 700491 / DSM 11845 / VT8) (Marinobacter aquaeolei).